Consider the following 293-residue polypeptide: Dehydrodolichyl diphosphate synthase complex subunit NUS1 (293 aa).

3 helical membrane passes run 1 to 23, 35 to 56, and 117 to 135; these read MTGL…RTLT, WIWR…GFTL, and IASL…ISVY. Residues N144 and N271 are each glycosylated (N-linked (GlcNAc...) asparagine). Residues 290–292 carry the RXG motif; crucial for prenyltransferase activity motif; it reads RLG. Isopentenyl diphosphate is bound by residues L291 and G292.

This sequence belongs to the UPP synthase family. The active dehydrodolichyl diphosphate synthase complex is a heterotetramer composed of a dimer of heterodimer of DHDDS and NUS1. Interacts with NPC2. Mg(2+) is required as a cofactor.

The protein localises to the endoplasmic reticulum membrane. It catalyses the reaction n isopentenyl diphosphate + (2E,6E)-farnesyl diphosphate = a di-trans,poly-cis-polyprenyl diphosphate + n diphosphate. It participates in protein modification; protein glycosylation. The protein operates within lipid metabolism. Activated by phospholipids including cardiolipin, phosphatidylcholine, phosphatidylethanolamine, phosphatidylinositol and phosphatidylserine. Functionally, with DHDDS, forms the dehydrodolichyl diphosphate synthase (DDS) complex, an essential component of the dolichol monophosphate (Dol-P) biosynthetic machinery. Both subunits contribute to enzymatic activity, i.e. condensation of multiple copies of isopentenyl pyrophosphate (IPP) to farnesyl pyrophosphate (FPP) to produce dehydrodolichyl diphosphate (Dedol-PP), a precursor of dolichol phosphate which is utilized as a sugar carrier in protein glycosylation in the endoplasmic reticulum (ER). Synthesizes long-chain polyprenols, mostly of C95 and C100 chain length. Regulates the glycosylation and stability of nascent NPC2, thereby promoting trafficking of LDL-derived cholesterol. Acts as a specific receptor for the N-terminus of Nogo-B, a neural and cardiovascular regulator. This chain is Dehydrodolichyl diphosphate synthase complex subunit NUS1, found in Homo sapiens (Human).